The chain runs to 430 residues: Signal recognition particle protein (430 aa).

Residues 105–112, 187–191, and 245–248 each bind GTP; these read GLQGSGKT, DTAGR, and TKLD.

Belongs to the GTP-binding SRP family. SRP54 subfamily. Part of the signal recognition particle protein translocation system, which is composed of SRP and FtsY.

It is found in the cytoplasm. It catalyses the reaction GTP + H2O = GDP + phosphate + H(+). Functionally, involved in targeting and insertion of nascent membrane proteins into the cytoplasmic membrane. Binds to the hydrophobic signal sequence of the ribosome-nascent chain (RNC) as it emerges from the ribosomes. The SRP-RNC complex is then targeted to the cytoplasmic membrane where it interacts with the SRP receptor FtsY. In Thermus aquaticus, this protein is Signal recognition particle protein.